Consider the following 132-residue polypeptide: Mini-ribonuclease 3 (132 aa).

Asp-17 is a catalytic residue.

This sequence belongs to the MrnC RNase family. Homodimer. The cofactor is Mg(2+).

It localises to the cytoplasm. Functionally, involved in correct processing of both the 5' and 3' ends of 23S rRNA precursor. Processes 30S rRNA precursor transcript even in absence of ribonuclease 3 (Rnc); Rnc processes 30S rRNA into smaller rRNA precursors. This Enterococcus faecalis (strain ATCC 700802 / V583) protein is Mini-ribonuclease 3.